We begin with the raw amino-acid sequence, 130 residues long: Small ribosomal subunit protein uS8 (130 aa).

This sequence belongs to the universal ribosomal protein uS8 family. Part of the 30S ribosomal subunit.

One of the primary rRNA binding proteins, it binds directly to 16S rRNA central domain where it helps coordinate assembly of the platform of the 30S subunit. The polypeptide is Small ribosomal subunit protein uS8 (Methanosphaerula palustris (strain ATCC BAA-1556 / DSM 19958 / E1-9c)).